Reading from the N-terminus, the 184-residue chain is dCTP deaminase (184 aa).

Position 107 to 112 (107 to 112) interacts with dCTP; the sequence is KSTIAR. Catalysis depends on Glu133, which acts as the Proton donor/acceptor. The dCTP site is built by Gln152, Tyr166, and Gln176.

This sequence belongs to the dCTP deaminase family. As to quaternary structure, homotrimer.

The enzyme catalyses dCTP + H2O + H(+) = dUTP + NH4(+). The protein operates within pyrimidine metabolism; dUMP biosynthesis; dUMP from dCTP (dUTP route): step 1/2. In terms of biological role, catalyzes the deamination of dCTP to dUTP. In Roseiflexus castenholzii (strain DSM 13941 / HLO8), this protein is dCTP deaminase.